We begin with the raw amino-acid sequence, 1857 residues long: U3 small nucleolar RNA-associated protein 10 (1857 aa).

Residues L267–V287 traverse the membrane as a helical segment. The HEAT repeat unit spans residues L1817–Y1855.

This sequence belongs to the HEATR1/UTP10 family. In terms of assembly, component of the ribosomal small subunit (SSU) processome.

It is found in the nucleus. The protein resides in the nucleolus. The protein localises to the membrane. Functionally, involved in nucleolar processing of pre-18S ribosomal RNA. Involved in ribosome biosynthesis. The protein is U3 small nucleolar RNA-associated protein 10 of Debaryomyces hansenii (strain ATCC 36239 / CBS 767 / BCRC 21394 / JCM 1990 / NBRC 0083 / IGC 2968) (Yeast).